A 711-amino-acid polypeptide reads, in one-letter code: Polyribonucleotide nucleotidyltransferase (711 aa).

Mg(2+)-binding residues include D486 and D492. One can recognise a KH domain in the interval 553–612; the sequence is PRIHTIKISPDKIKDVIGKGGSVIRALTEETGTTIEIEDDGTVKIAATDGEKAKFAIRRI. The region spanning 622 to 690 is the S1 motif domain; sequence GRIYNGKVTR…RQGRVRLSIK (69 aa). Residues 690–711 form a disordered region; sequence KEATEQTQPAAAPEAPAAEQGE. Residues 694-711 show a composition bias toward low complexity; it reads EQTQPAAAPEAPAAEQGE.

It belongs to the polyribonucleotide nucleotidyltransferase family. Component of the RNA degradosome, which is a multiprotein complex involved in RNA processing and mRNA degradation. Requires Mg(2+) as cofactor.

The protein resides in the cytoplasm. The enzyme catalyses RNA(n+1) + phosphate = RNA(n) + a ribonucleoside 5'-diphosphate. In terms of biological role, involved in mRNA degradation. Catalyzes the phosphorolysis of single-stranded polyribonucleotides processively in the 3'- to 5'-direction. This Enterobacter sp. (strain 638) protein is Polyribonucleotide nucleotidyltransferase.